The following is a 303-amino-acid chain: tRNA pseudouridine synthase-like 1 (303 aa).

Asp-66 serves as the catalytic Nucleophile. Ser-84 carries the post-translational modification Phosphoserine. Tyr-130 contributes to the substrate binding site.

The protein belongs to the tRNA pseudouridine synthase TruA family.

It carries out the reaction a uridine in tRNA = a pseudouridine in tRNA. The chain is tRNA pseudouridine synthase-like 1 (PUSL1) from Homo sapiens (Human).